The following is a 103-amino-acid chain: V-type sodium ATPase subunit G (103 aa).

This sequence belongs to the V-ATPase F subunit family.

Involved in ATP-driven sodium extrusion. In Enterococcus hirae (strain ATCC 9790 / DSM 20160 / JCM 8729 / LMG 6399 / NBRC 3181 / NCIMB 6459 / NCDO 1258 / NCTC 12367 / WDCM 00089 / R), this protein is V-type sodium ATPase subunit G (ntpG).